Consider the following 753-residue polypeptide: 5-methyltetrahydropteroyltriglutamate--homocysteine methyltransferase (753 aa).

Residues 17–20 (RELK) and Lys117 each bind 5-methyltetrahydropteroyltri-L-glutamate. Residues 431–433 (IGS) and Glu484 contribute to the L-homocysteine site. Residues 431–433 (IGS) and Glu484 contribute to the L-methionine site. 5-methyltetrahydropteroyltri-L-glutamate contacts are provided by residues 515 to 516 (RC) and Trp561. Asp599 lines the L-homocysteine pocket. An L-methionine-binding site is contributed by Asp599. Glu605 lines the 5-methyltetrahydropteroyltri-L-glutamate pocket. Positions 641, 643, and 665 each coordinate Zn(2+). The active-site Proton donor is His694. Position 726 (Cys726) interacts with Zn(2+).

The protein belongs to the vitamin-B12 independent methionine synthase family. The cofactor is Zn(2+).

It carries out the reaction 5-methyltetrahydropteroyltri-L-glutamate + L-homocysteine = tetrahydropteroyltri-L-glutamate + L-methionine. Its pathway is amino-acid biosynthesis; L-methionine biosynthesis via de novo pathway; L-methionine from L-homocysteine (MetE route): step 1/1. In terms of biological role, catalyzes the transfer of a methyl group from 5-methyltetrahydrofolate to homocysteine resulting in methionine formation. The sequence is that of 5-methyltetrahydropteroyltriglutamate--homocysteine methyltransferase from Escherichia coli O6:H1 (strain CFT073 / ATCC 700928 / UPEC).